Reading from the N-terminus, the 226-residue chain is Cytidylate kinase (226 aa).

ATP is bound at residue 14–22 (GPAGAGKST).

The protein belongs to the cytidylate kinase family. Type 1 subfamily.

The protein resides in the cytoplasm. The catalysed reaction is CMP + ATP = CDP + ADP. The enzyme catalyses dCMP + ATP = dCDP + ADP. The polypeptide is Cytidylate kinase (Symbiobacterium thermophilum (strain DSM 24528 / JCM 14929 / IAM 14863 / T)).